We begin with the raw amino-acid sequence, 1433 residues long: Pleckstrin homology domain-containing family H member 1 (1433 aa).

Residues 40–174 (NIRHLLAERM…QILMLQDKLQ (135 aa)) adopt a coiled-coil conformation. Disordered stretches follow at residues 247-346 (DKAD…LSPP) and 552-634 (SSVP…TSSY). Residues 252–266 (PKSSQDGVDATSTVK) are compositionally biased toward polar residues. Residues 279–299 (MRDRAMGGASDRDHSSDELNS) show a composition bias toward basic and acidic residues. Over residues 308–318 (SSSSSSSSSSS) the composition is skewed to low complexity. Over residues 332–343 (TPTPKSPPPVSL) the composition is skewed to pro residues. The segment covering 557-567 (PDDDSGSEDDS) has biased composition (acidic residues). The span at 568–578 (SSLASLHTSTL) shows a compositional bias: low complexity. The segment covering 597 to 606 (VSTSSISSES) has biased composition (polar residues). PH domains follow at residues 643–737 (TLEK…NVLK) and 751–859 (KPTA…VAAG). Residues 896–1050 (FSKEGLRYPL…PSRMEILSIL (155 aa)) form the MyTH4 domain. Residues 1061-1392 (FSIPVHFMNN…SYINYWTSSL (332 aa)) enclose the FERM domain.

In terms of biological role, critical component of the guidance pathway underlying endothelial cell migration and blood vessel patterning. Involved in mediating membrane localization of ephrin proteins, which have been shown to provide guidance cues for endothelial cell migration. The protein is Pleckstrin homology domain-containing family H member 1 (plekhh1) of Danio rerio (Zebrafish).